Reading from the N-terminus, the 483-residue chain is Acetyltransferase AOL_s00215g273 (483 aa).

Helical transmembrane passes span 9 to 29, 33 to 53, 141 to 161, 191 to 211, 292 to 312, 334 to 354, 372 to 392, and 453 to 473; these read ALIG…TSFV, IYPL…TEGL, VAYI…LYTC, IFQM…SVLV, FLVF…VYYG, VTGY…FICW, WFVG…VLWI, and LGGY…GSGF.

The protein belongs to the wax synthase family.

Its subcellular location is the membrane. Its pathway is secondary metabolite biosynthesis; terpenoid biosynthesis. Its function is as follows. Acetyltransferase; part of the gene cluster that mediates the biosynthesis of sesquiterpenyl epoxy-cyclohexenoids (SECs) such as anthrobotrisins and arthrosporols, metabolites that possess a novel hybrid carbon skeleton consisting of a polyketide-derived epoxycyclohexenol combined with a terpenoid-derived monocyclic sesquiterpenol substructure (PKS-PTS hybrid). The SEC pathway plays an important role for fungal soil colonization via decreasing fungal nematode-capturing ability. The role of the acetyltransferase in SEC biosynthesis has still to be determined. The pathway begins with the biosynthesis of 6-methylsalicylic acid (6-MSA), the first precursor of the polyketide-derived epoxycyclohexenol in arthrosporols, by the polyketide synthase (PKS) AOL_s00215g283 via condensation of 1 acetate and 3 malonate units. The 6-methylsalicylic acid decarboxylase AOL_s00215g281 then catalyzes the decarboxylation of 6-methylsalicylic acid to yield m-cresol. The cytochrome P450 monooxygenase AOL_s00215g282 further oxidizes m-cresol to yield toluquinol. With the assistance of the oxidoreductase AOL_s00215g277, the polyprenyl transferase AOL_s00215g276 catalyzes the farnesylation of toluquinol to produce farnesyl hydroquinone, the hybrid precursor for biosynthesis of SECs. Farnesyl hydroquinone undergoes epoxidation and then subsequent dehydrogenation to form farnesyl epoxy-quinone, the first and simplest SEC. The cytochrome P450 monooxygenase AOL_s00215g278 and the FAD-dependent monooxygenase AOL_s00215g279 might be involved in the oxygenation of the phenol moiety, most likely in the epoxy formation. The cytochrome P450 monooxygenases AOL_s00215g274 and AOL_s00215g280 are involved in specific regional ketone reductions at respectively C-4 and C-1 of farnesyl epoxy-quinone PubMed:33823587. The chain is Acetyltransferase AOL_s00215g273 from Arthrobotrys oligospora (strain ATCC 24927 / CBS 115.81 / DSM 1491) (Nematode-trapping fungus).